Reading from the N-terminus, the 424-residue chain is Serine--tRNA ligase (424 aa).

Residue 233–235 (TAE) participates in L-serine binding. 264-266 (RRE) provides a ligand contact to ATP. Glu-287 lines the L-serine pocket. Residue 351-354 (EISS) coordinates ATP. Ser-387 contacts L-serine.

Belongs to the class-II aminoacyl-tRNA synthetase family. Type-1 seryl-tRNA synthetase subfamily. Homodimer. The tRNA molecule binds across the dimer.

It is found in the cytoplasm. The enzyme catalyses tRNA(Ser) + L-serine + ATP = L-seryl-tRNA(Ser) + AMP + diphosphate + H(+). The catalysed reaction is tRNA(Sec) + L-serine + ATP = L-seryl-tRNA(Sec) + AMP + diphosphate + H(+). Its pathway is aminoacyl-tRNA biosynthesis; selenocysteinyl-tRNA(Sec) biosynthesis; L-seryl-tRNA(Sec) from L-serine and tRNA(Sec): step 1/1. Its function is as follows. Catalyzes the attachment of serine to tRNA(Ser). Is also able to aminoacylate tRNA(Sec) with serine, to form the misacylated tRNA L-seryl-tRNA(Sec), which will be further converted into selenocysteinyl-tRNA(Sec). This is Serine--tRNA ligase from Acaryochloris marina (strain MBIC 11017).